The primary structure comprises 124 residues: Small ribosomal subunit protein uS12 (124 aa).

The residue at position 90 (Asp90) is a 3-methylthioaspartic acid.

This sequence belongs to the universal ribosomal protein uS12 family. In terms of assembly, part of the 30S ribosomal subunit. Contacts proteins S8 and S17. May interact with IF1 in the 30S initiation complex.

In terms of biological role, with S4 and S5 plays an important role in translational accuracy. Its function is as follows. Interacts with and stabilizes bases of the 16S rRNA that are involved in tRNA selection in the A site and with the mRNA backbone. Located at the interface of the 30S and 50S subunits, it traverses the body of the 30S subunit contacting proteins on the other side and probably holding the rRNA structure together. The combined cluster of proteins S8, S12 and S17 appears to hold together the shoulder and platform of the 30S subunit. The protein is Small ribosomal subunit protein uS12 of Wolbachia sp. subsp. Drosophila simulans (strain wRi).